Consider the following 564-residue polypeptide: Proline--tRNA ligase 1 (564 aa).

It belongs to the class-II aminoacyl-tRNA synthetase family. ProS type 1 subfamily. Homodimer.

It is found in the cytoplasm. It catalyses the reaction tRNA(Pro) + L-proline + ATP = L-prolyl-tRNA(Pro) + AMP + diphosphate. In terms of biological role, catalyzes the attachment of proline to tRNA(Pro) in a two-step reaction: proline is first activated by ATP to form Pro-AMP and then transferred to the acceptor end of tRNA(Pro). As ProRS can inadvertently accommodate and process non-cognate amino acids such as alanine and cysteine, to avoid such errors it has two additional distinct editing activities against alanine. One activity is designated as 'pretransfer' editing and involves the tRNA(Pro)-independent hydrolysis of activated Ala-AMP. The other activity is designated 'posttransfer' editing and involves deacylation of mischarged Ala-tRNA(Pro). The misacylated Cys-tRNA(Pro) is not edited by ProRS. This Streptomyces avermitilis (strain ATCC 31267 / DSM 46492 / JCM 5070 / NBRC 14893 / NCIMB 12804 / NRRL 8165 / MA-4680) protein is Proline--tRNA ligase 1.